The sequence spans 525 residues: uncharacterized protein (525 aa).

2 stretches are compositionally biased toward polar residues: residues 139–149 and 336–349; these read LNSTPDKTQAG and SGKT…HTTS. Disordered regions lie at residues 139–158 and 330–356; these read LNST…HQAP and PAPA…PYAT.

This is an uncharacterized protein from Treponema pallidum (strain Nichols).